The primary structure comprises 711 residues: Ribosomal RNA large subunit methyltransferase K/L (711 aa).

Positions 42-153 constitute a THUMP domain; that stretch reads DAQRAVLWSR…KGRATISVDL (112 aa).

The protein belongs to the methyltransferase superfamily. RlmKL family.

Its subcellular location is the cytoplasm. It carries out the reaction guanosine(2445) in 23S rRNA + S-adenosyl-L-methionine = N(2)-methylguanosine(2445) in 23S rRNA + S-adenosyl-L-homocysteine + H(+). The enzyme catalyses guanosine(2069) in 23S rRNA + S-adenosyl-L-methionine = N(2)-methylguanosine(2069) in 23S rRNA + S-adenosyl-L-homocysteine + H(+). Its function is as follows. Specifically methylates the guanine in position 2445 (m2G2445) and the guanine in position 2069 (m7G2069) of 23S rRNA. The polypeptide is Ribosomal RNA large subunit methyltransferase K/L (Xanthomonas oryzae pv. oryzae (strain MAFF 311018)).